A 1616-amino-acid chain; its full sequence is MEGAEPRARPERLAEAETRAADGGRLVEVQLSGGAPWGFTLKGGREHGEPLVITKIEEGSKAAAVDKLLAGDEIVGINDIGLSGFRQEAICLVKGSHKTLKLVVKRRSELGWRPHSWHATKFSDSHPELAASPFTSTSGCPSWSGRHHASSSSHDLSSSWEQTNLQRTLDHFSSLGSVDSLDHPSSRLSVAKSNSSIDHLGSHSKRDSAYGSFSTSSSTPDHTLSKADTSSAENILYTVGLWEAPRQGGRQAQAAGDPQGSEEKLSCFPPRVPGDSGKGPRPEYNAEPKLAAPGRSNFGPVWYVPDKKKAPSSPPPPPPPLRSDSFAATKSHEKAQGPVFSEAAAAQHFTALAQAQPRGDRRPELTDRPWRSAHPGSLGKGSGGPGCPQEAHADGSWPPSKDGASSRLQASLSSSDVRFPQSPHSGRHPPLYSDHSPLCADSLGQEPGAASFQNDSPPQVRGLSSCDQKLGSGWQGPRPCVQGDLQAAQLWAGCWPSDTALGALESLPPPTVGQSPRHHLPQPEGPPDARETGRCYPLDKGAEGCSAGAQEPPRASRAEKASQRLAASITWADGESSRICPQETPLLHSLTQEGKRRPESSPEDSATRPPPFDAHVGKPTRRSDRFATTLRNEIQMHRAKLQKSRSTVALTAAGEAEDGTGRWRAGLGGGTQEGPLAGTYKDHLKEAQARVLRATSFKRRDLDPNPGDLYPESLEHRMGDPDTVPHFWEAGLAQPPSSTSGGPHPPRIGGRRRFTAEQKLKSYSEPEKMNEVGLTRGYSPHQHPRTSEDTVGTFADRWKFFEETSKPVPQRPAQKQALHGIPRDKPERPRTAGRTCEGTEPWSRTTSLGDSLNAHSAAEKAGTSDLPRRLGTFAEYQASWKEQRKPLEARSSGRCHSADDILDVSLDPQERPQHVHGRSRSSPSTDHYKQEASVELRRQAGDPGEPREELPSAVRAEEGQSTPRQADAQCREGSPGSQQHPPSQKAPNPPTFSELSHCRGAPELPREGRGRAGTLPRDYRYSEESTPADLGPRAQSPGSPLHARGQDSWPVSSALLSKRPAPQRPPPPKREPRRYRATDGAPADAPVGVLGRPFPTPSPASLDVYVARLSLSHSPSVFSSAQPQDTPKATVCERGSQHVSGDASRPLPEALLPPKQQHLRLQTATMETSRSPSPQFAPQKLTDKPPLLIQDEDSTRIERVMDNNTTVKMVPIKIVHSESQPEKESRQSLACPAEPPALPHGLEKDQIKTLSTSEQFYSRFCLYTRQGAEPEAPHRAQPAEPQPLGTQVPPEKDRCTSPPGLSYMKAKEKTVEDLKSEELAREIVGKDKSLADILDPSVKIKTTMDLMEGIFPKDEHLLEEAQQRRKLLPKIPSPRSTEERKEEPSVPAAVSLATNSTYYSTSAPKAELLIKMKDLQEQQEHEEDSGSDLDHDLSVKKQELIESISRKLQVLREARESLLEDVQANTVLGAEVEAIVKGVCKPSEFDKFRMFIGDLDKVVNLLLSLSGRLARVENALNNLDDGASPGDRQSLLEKQRVLIQQHEDAKELKENLDRRERIVFDILANYLSEESLADYEHFVKMKSALIIEQRELEDKIHLGEEQLKCLLDSLQPERGK.

In terms of domain architecture, PDZ spans 26–108; sequence LVEVQLSGGA…TLKLVVKRRS (83 aa). Disordered regions lie at residues 128-159 and 183-229; these read ELAA…LSSS and HPSS…KADT. The span at 150-159 shows a compositional bias: low complexity; that stretch reads SSSSHDLSSS. Composition is skewed to polar residues over residues 186 to 197 and 220 to 229; these read SRLSVAKSNSSI and PDHTLSKADT. Residue S231 is modified to Phosphoserine. A compositionally biased stretch (low complexity) spans 247–259; sequence QGGRQAQAAGDPQ. 8 disordered regions span residues 247 to 475, 502 to 678, 695 to 790, 802 to 869, 881 to 1100, 1115 to 1184, 1268 to 1302, and 1363 to 1389; these read QGGR…SGWQ, GALE…PLAG, TSFK…SEDT, EETS…LPRR, KEQR…PSPA, PSVF…LTDK, AEPE…PGLS, and QRRK…VPAA. Over residues 312–321 the composition is skewed to pro residues; sequence SSPPPPPPPL. Phosphoserine is present on residues S313 and S325. Positions 343–356 are enriched in low complexity; the sequence is AAAAQHFTALAQAQ. A compositionally biased stretch (basic and acidic residues) spans 358 to 370; that stretch reads RGDRRPELTDRPW. The segment covering 405 to 415 has biased composition (low complexity); the sequence is SSRLQASLSSS. S413 bears the Phosphoserine mark. Positions 684–773 constitute an ASD1 domain; sequence LKEAQARVLR…SEPEKMNEVG (90 aa). Basic and acidic residues-rich tracts occupy residues 754–770 and 821–830; these read FTAE…EKMN and IPRDKPERPR. The span at 842–854 shows a compositional bias: polar residues; sequence WSRTTSLGDSLNA. S851, S897, S921, S922, and S924 each carry phosphoserine. T925 is modified (phosphothreonine). The span at 926–958 shows a compositional bias: basic and acidic residues; it reads DHYKQEASVELRRQAGDPGEPREELPSAVRAEE. S974 is subject to Phosphoserine. Residues 975–994 show a composition bias toward polar residues; that stretch reads PGSQQHPPSQKAPNPPTFSE. Phosphoserine is present on residues S1036 and S1039. Positions 1068–1077 are enriched in basic and acidic residues; it reads PKREPRRYRA. The segment covering 1159-1176 has biased composition (polar residues); it reads LRLQTATMETSRSPSPQF. Phosphoserine occurs at positions 1171, 1173, and 1297. Positions 1317–1611 constitute an ASD2 domain; the sequence is EELAREIVGK…QLKCLLDSLQ (295 aa).

The protein belongs to the shroom family. Interacts with F-actin. Abundant in retina and melanoma; also in brain, placenta, lung, kidney and pancreas.

It localises to the apical cell membrane. It is found in the cell junction. The protein resides in the tight junction. The protein localises to the cytoplasm. Its subcellular location is the cytoskeleton. Its function is as follows. May be involved in endothelial cell morphology changes during cell spreading. In the retinal pigment epithelium, may regulate the biogenesis of melanosomes and promote their association with the apical cell surface by inducing gamma-tubulin redistribution. The polypeptide is Protein Shroom2 (SHROOM2) (Homo sapiens (Human)).